The sequence spans 317 residues: Malate dehydrogenase (317 aa).

NAD(+)-binding positions include 10 to 15 (GGGQIG) and aspartate 34. Arginine 83 and arginine 89 together coordinate substrate. Residues asparagine 96 and 119–121 (ISN) contribute to the NAD(+) site. 2 residues coordinate substrate: asparagine 121 and arginine 152. Histidine 176 functions as the Proton acceptor in the catalytic mechanism.

The protein belongs to the LDH/MDH superfamily. MDH type 3 family.

The enzyme catalyses (S)-malate + NAD(+) = oxaloacetate + NADH + H(+). Catalyzes the reversible oxidation of malate to oxaloacetate. The chain is Malate dehydrogenase from Geobacter metallireducens (strain ATCC 53774 / DSM 7210 / GS-15).